Consider the following 520-residue polypeptide: GMP synthase [glutamine-hydrolyzing] (520 aa).

The region spanning 13-205 (KIIVLDYGSQ…ALNICKAKGD (193 aa)) is the Glutamine amidotransferase type-1 domain. Catalysis depends on Cys90, which acts as the Nucleophile. Active-site residues include His179 and Glu181. The 190-residue stretch at 206-395 (WSMDNFIDMQ…LGMPDHIVWR (190 aa)) folds into the GMPS ATP-PPase domain. Residue 233–239 (SGGVDSS) coordinates ATP.

In terms of assembly, homodimer.

It catalyses the reaction XMP + L-glutamine + ATP + H2O = GMP + L-glutamate + AMP + diphosphate + 2 H(+). Its pathway is purine metabolism; GMP biosynthesis; GMP from XMP (L-Gln route): step 1/1. In terms of biological role, catalyzes the synthesis of GMP from XMP. This is GMP synthase [glutamine-hydrolyzing] from Streptococcus pneumoniae (strain ATCC 700669 / Spain 23F-1).